The chain runs to 1460 residues: MEQGMDYWLGQIQQKDVGKRLQVGPDLIEYLLDRQKSIDLEQDQTLLDRMVDGLATSWVNSSNYKVALLGMDILSELVSRLQDRFRTQLGTVLPSLMDRLGDAKDSVREQDQSLLIKIMEQASNPQYVWERMFSGFKHKNFRTREGVCLCLIATLNVYGANSLTLSKIVPHICNLLGDPNSQVRDAAINCLVEIYRHVGERVRADLSKKGLPQSRLNVIFTKFDEVQKSGTMILSASDKNFDDEDSVDGNRPSSASSSASSKAPQTARRGVSLGTARRPGPSSAAAKTGGTAKEGAGALDEEDFIRAFEDVPNVQIYSSRDLEESLNKIREILSDDKHDWEQRITALKKIRSLLLAGAAEYDNFFQQLRLLDGAFKLSAKDLRSQVVREACITLGHLSSVLGNKFDHGAEAIMPTVFNLVPNSAKIMATSGIVAIRLIIRHTHVPRLIPIITSNCTSKSVAVRRRCYDFLDLLLQEWQTHSLERHVSVLAETIKKGIHDADSEAKIVARKCYWGFHSHFSKEAEHLFHTLESSYQKALQSHLKNSDSIVSLPQSDRSSSSSQESLNRPLSTKRSPTGSTVSRASSTTSKSTPGSLQRSRSDIDVNAAATSKSKAASGASTAPFISVAALPPGSYASLGRIRTRRQSSGSTTSTASTPADTRGRSRAKVVSQSQPGSRSNSPGKLLGSSYGGIATGPQRVPQMPSSEKRSRIPRSQGCSRETSPSRIGLDRFGISQQGRIPSAMRVLSSSTDLEAAVADALLLGDSRNKKKPVRRRYEPYGMYSDDDANSDASSACSERSYSSKNGGIPHYLRQTEDVAEVLNHCASSNWSERKEGLLGLQNLLKSQRTLSRVELKRLCEIFTRMFADPHSKRVFSMFLETLVDFVIIHKDDLQDWLFILLTQLLKKMGADLLGSVQAKVQKALDVTRDSFPFDQQFNILMRFIVDQTQTPNLKVKVAILKYIESLARQMDPTDFVNSSETRLAVSRIITWTTEPKSSDVRKAAQIVLISLFELNTPEFTMLLGALPKTFQDGATKLLHNHLKNSSNSSMGSPSNTIGRTPSRHSSSRASPLTSPTNCSHGGLSPSMLDYDTENLNSDEIYSSLRGVTEAIEKFSFRSQVDLNEPVRRDSKKESELGSCDVGIASPASDLRGGTDMVEGGRMALDNKTSLLNTQPPRAFTGPRGREYNPYAYSDSINSYDKTALKEAVFDDDMDQLRDVSIDHSDLVADLLKELSNHNERVEERKGALCELLKITREDNLAVWEEHFKTILLLLLETLGDKDHAIRALALRVLREILRNQPARFKNYAELTIMKTLEAHKDSHKEVVRAAEEAASTLAGSIHPEQCIKVLCPIIQTADYPINLAAIKMQAKVIERISKESLHQILPDIIPGLLQGYDNTESSVRKASVFCLVAIYSVIGEELKPYLAQLTGSKMKLLNLYIKRAQTTNSNSSSSSDVSTHS.

2 HEAT repeats span residues threonine 87–asparagine 124 and leucine 163–glutamate 200. Positions serine 237–lysine 293 are disordered. Low complexity predominate over residues proline 279–lysine 293. HEAT repeat units follow at residues histidine 407–threonine 442 and histidine 443–threonine 479. 3 disordered regions span residues serine 545–asparagine 605, isoleucine 640–isoleucine 733, and proline 778–tyrosine 800. Residues serine 550 to leucine 569 are compositionally biased toward low complexity. The span at threonine 571–arginine 597 shows a compositional bias: polar residues. A compositionally biased stretch (low complexity) spans glutamine 645–aspartate 659. Composition is skewed to polar residues over residues valine 669 to proline 681 and glutamine 715 to serine 724. A compositionally biased stretch (low complexity) spans serine 789–tyrosine 800. The HEAT 5 repeat unit spans residues phenylalanine 942–glutamate 979. The disordered stretch occupies residues leucine 1041–proline 1084. Residues lysine 1042–asparagine 1054 are compositionally biased toward low complexity. Over residues serine 1066–serine 1078 the composition is skewed to polar residues. 2 HEAT repeats span residues leucine 1272–leucine 1309 and glycine 1390–glutamine 1427.

The protein belongs to the CLASP family.

It is found in the cytoplasm. The protein localises to the cytoskeleton. Its subcellular location is the microtubule organizing center. The protein resides in the centrosome. It localises to the chromosome. It is found in the centromere. The protein localises to the kinetochore. Its subcellular location is the spindle. The protein resides in the golgi apparatus. It localises to the trans-Golgi network. Functionally, microtubule plus-end tracking protein that promotes the stabilization of dynamic microtubules during anaphase. Plays a crucial role in chromatin-induced microtubule formation. May also act at microtubule minus ends. May be involved in the nucleation of noncentrosomal microtubules originating from the trans-Golgi network (TGN). The sequence is that of CLIP-associating protein 1-A (clasp1-a) from Xenopus laevis (African clawed frog).